The sequence spans 341 residues: L-threonine 3-dehydrogenase (341 aa).

Cys-38 lines the Zn(2+) pocket. Active-site charge relay system residues include Thr-40 and His-43. The Zn(2+) site is built by His-63, Glu-64, Cys-93, Cys-96, Cys-99, and Cys-107. Residues Ile-175, Asp-195, Arg-200, 262–264, and 286–287 each bind NAD(+); these read LGI and IY.

This sequence belongs to the zinc-containing alcohol dehydrogenase family. Homotetramer. Zn(2+) serves as cofactor.

Its subcellular location is the cytoplasm. The catalysed reaction is L-threonine + NAD(+) = (2S)-2-amino-3-oxobutanoate + NADH + H(+). It functions in the pathway amino-acid degradation; L-threonine degradation via oxydo-reductase pathway; glycine from L-threonine: step 1/2. Functionally, catalyzes the NAD(+)-dependent oxidation of L-threonine to 2-amino-3-ketobutyrate. In Shewanella sediminis (strain HAW-EB3), this protein is L-threonine 3-dehydrogenase.